We begin with the raw amino-acid sequence, 233 residues long: MAGKRTRKINEGVDPTKLYALTQAIGMVKERAVAKFDETIEVSMNLGVDPRHADQMVRGVVNLPNGTGRTVRVAVFARGAKADEAKAAGADVVGAEDLVEIVQGGKIEFDRCIATPDMMPLVGRLGKVLGPRGMMPNPKVGTVTMDVAGAVKASKGGAVEFRVEKAGIVHAGIGKASFDAKALEENIRAFADAVIKAKPAGAKGNYVKRVAISSTMGPGVKIEVGSVTAAPTA.

Belongs to the universal ribosomal protein uL1 family. In terms of assembly, part of the 50S ribosomal subunit.

Functionally, binds directly to 23S rRNA. The L1 stalk is quite mobile in the ribosome, and is involved in E site tRNA release. Its function is as follows. Protein L1 is also a translational repressor protein, it controls the translation of the L11 operon by binding to its mRNA. This is Large ribosomal subunit protein uL1 from Rhizobium etli (strain CIAT 652).